Consider the following 611-residue polypeptide: Protein halfway (611 aa).

The first 22 residues, 1 to 22 (MLAYTHGTWLLLLLLLVAGACA), serve as a signal peptide directing secretion. Disordered stretches follow at residues 31–64 (DPAALGEESTPHAHAHPQARHHHHAHPHAPLKED), 90–132 (SLAE…AAPE), and 154–185 (GRAETSEGQGSTVAQSEAQNRGGQGNSQCQCR). Over residues 43–59 (AHAHPQARHHHHAHPHA) the composition is skewed to basic residues. A compositionally biased stretch (polar residues) spans 90 to 101 (SLAETQSMSDPG). Residues 102–123 (SVTDTTSTSTSHSTSTTSTTSP) show a composition bias toward low complexity. The span at 159–183 (SEGQGSTVAQSEAQNRGGQGNSQCQ) shows a compositional bias: polar residues. N-linked (GlcNAc...) asparagine glycosylation is found at Asn221, Asn246, Asn264, and Asn269. LRR repeat units follow at residues 236–257 (SLQSLAVTDGNITRLVNAFPRL), 259–280 (ALKCLNISNNNISEIHSRAVKD), 283–304 (HLEFFGMSNNNLSLVPHRNQNK), and 313–334 (NMRMLCTPLNEIIYTESINFLN). Residues 361 to 416 (ENRKRCVTNCPVIPNYGSCNCTLENIMIIQDNQSKPQCHVDCSNLGLVELPQRLPD) enclose the LRRNT domain. LRR repeat units lie at residues 417–438 (NTFMLNITNNKITSLGDYFHTN), 443–464 (NINRLLADNNQISSIYEFEGTK), and 468–489 (TFQRIYMRNNSLSKIPEYFLNN). An LRRCT domain is found at 505-554 (NKLQCDCNSAKTLQNWLKERSSDIPDYMEIRCRNMPQRVIELQEAKLCQS).

Its function is as follows. Has a role in the ecdysone induced cascade; probably indirect control of 'late' ecdysone genes. This is Protein halfway from Drosophila melanogaster (Fruit fly).